The chain runs to 134 residues: Profilin-2 (134 aa).

An intrachain disulfide couples Cys13 to Cys118. Residues Ala84–Thr100 carry the Involved in PIP2 interaction motif. Thr114 carries the phosphothreonine modification.

It belongs to the profilin family. As to quaternary structure, occurs in many kinds of cells as a complex with monomeric actin in a 1:1 ratio. Post-translationally, phosphorylated by MAP kinases.

Its subcellular location is the cytoplasm. The protein resides in the cytoskeleton. Binds to actin and affects the structure of the cytoskeleton. At high concentrations, profilin prevents the polymerization of actin, whereas it enhances it at low concentrations. This is Profilin-2 from Olea europaea (Common olive).